Here is a 747-residue protein sequence, read N- to C-terminus: 3',5'-cyclic-AMP phosphodiesterase 4D (747 aa).

Residues 1-28 are disordered; it reads MERDTCDVLSRSKSASEETLHSCNEEED. Over residues 14 to 24 the composition is skewed to basic and acidic residues; the sequence is SASEETLHSCN. Residues S238, S240, S287, and S314 each carry the phosphoserine modification. Residues 282–302 form a disordered region; it reads EVEIPSPTQKEKEKKKRPMSQ. Positions 325 to 654 constitute a PDEase domain; it reads VKTEQEDVLA…EWYQSTIPQS (330 aa). Residue K326 forms a Glycyl lysine isopeptide (Lys-Gly) (interchain with G-Cter in SUMO) linkage. H401 serves as the catalytic Proton donor. H401 lines the 3',5'-cyclic AMP pocket. H401 is a binding site for AMP. Zn(2+) contacts are provided by H405, H441, D442, and D559. AMP contacts are provided by D442, D559, N562, Q610, and F613. D442 is a binding site for Mg(2+). D442 provides a ligand contact to Mn(2+). Residues Q610 and F613 each contribute to the 3',5'-cyclic AMP site. A disordered region spans residues 649–747; sequence STIPQSPSPA…CVPDDCCPDT (99 aa). Polar residues predominate over residues 701–712; the sequence is CSDSKTLCTQDS. A compositionally biased stretch (acidic residues) spans 718 to 734; that stretch reads PLDEQVEEEAVAEEESQ.

Belongs to the cyclic nucleotide phosphodiesterase family. PDE4 subfamily. Homodimer for the long isoforms. Isoforms with truncated N-termini are monomeric. Binds ARRB2. Interacts with PDE4DIP. Identified in a complex composed of RYR1, PDE4D, PKA, FKBP1A and protein phosphatase 1 (PP1). Interacts (via N-terminal region) with SHANK2 (via proline-rich region); the interaction is increased in a PKA-dependent manner. Requires Zn(2+) as cofactor. The cofactor is Mg(2+). Mn(2+) is required as a cofactor. Sumoylation of long isoforms by PIAS4 augments their activation by PKA phosphorylation and represses their inhibition by ERK phosphorylation. Expressed in brain (at protein level). Isoform 7 is detected in heart, brain, lung, kidney and testis.

The protein localises to the cytoplasm. The protein resides in the membrane. It is found in the cytoskeleton. It localises to the microtubule organizing center. Its subcellular location is the centrosome. The protein localises to the apical cell membrane. The enzyme catalyses 3',5'-cyclic AMP + H2O = AMP + H(+). It functions in the pathway purine metabolism; 3',5'-cyclic AMP degradation; AMP from 3',5'-cyclic AMP: step 1/1. With respect to regulation, inhibited by rolipram. Activated by phosphatidic acid. In terms of biological role, hydrolyzes the second messenger cAMP, which is a key regulator of many important physiological processes. In Mus musculus (Mouse), this protein is 3',5'-cyclic-AMP phosphodiesterase 4D (Pde4d).